The sequence spans 339 residues: Heat-inducible transcription repressor HrcA (339 aa).

The protein belongs to the HrcA family.

Its function is as follows. Negative regulator of class I heat shock genes (grpE-dnaK-dnaJ and groELS operons). Prevents heat-shock induction of these operons. This Paraburkholderia phytofirmans (strain DSM 17436 / LMG 22146 / PsJN) (Burkholderia phytofirmans) protein is Heat-inducible transcription repressor HrcA.